The following is a 298-amino-acid chain: Troponin T, cardiac muscle (298 aa).

Acidic residues predominate over residues 1-70 (MSDIEEVVEE…EAKEAEDGPM (70 aa)). Disordered stretches follow at residues 1–95 (MSDI…GERV) and 120–219 (FENR…EKKK). S2 is modified (N-acetylserine). S2 carries the post-translational modification Phosphoserine; by CK2. Composition is skewed to basic and acidic residues over residues 120–183 (FENR…DEAR) and 203–219 (QTERKSGKRQTEREKKK). Position 204 is a phosphothreonine; by PKC/PRKCA (T204). S208 is modified (phosphoserine; by PKC/PRKCA). T213 carries the phosphothreonine; by PKC/PRKCA and RAF1 modification. Residue T294 is modified to Phosphothreonine; by PKC/PRKCA.

The protein belongs to the troponin T family. Phosphorylation at Thr-213 by PRKCA induces significant reduction in myofilament calcium sensitivity and actomyosin ATPase activity. In terms of tissue distribution, heart. The fetal heart shows a greater expression in the atrium than in the ventricle, while the adult heart shows a greater expression in the ventricle than in the atrium. Isoform 6 predominates in normal adult heart. Isoforms 1, 7 and 8 are expressed in fetal heart. Isoform 7 is also expressed in failing adult heart.

Its function is as follows. Troponin T is the tropomyosin-binding subunit of troponin, the thin filament regulatory complex which confers calcium-sensitivity to striated muscle actomyosin ATPase activity. This chain is Troponin T, cardiac muscle (TNNT2), found in Homo sapiens (Human).